Reading from the N-terminus, the 351-residue chain is UDP-3-O-acylglucosamine N-acyltransferase (351 aa).

The Proton acceptor role is filled by histidine 240.

Belongs to the transferase hexapeptide repeat family. LpxD subfamily. In terms of assembly, homotrimer.

It catalyses the reaction a UDP-3-O-[(3R)-3-hydroxyacyl]-alpha-D-glucosamine + a (3R)-hydroxyacyl-[ACP] = a UDP-2-N,3-O-bis[(3R)-3-hydroxyacyl]-alpha-D-glucosamine + holo-[ACP] + H(+). It functions in the pathway bacterial outer membrane biogenesis; LPS lipid A biosynthesis. Catalyzes the N-acylation of UDP-3-O-acylglucosamine using 3-hydroxyacyl-ACP as the acyl donor. Is involved in the biosynthesis of lipid A, a phosphorylated glycolipid that anchors the lipopolysaccharide to the outer membrane of the cell. This chain is UDP-3-O-acylglucosamine N-acyltransferase, found in Pseudomonas putida (strain ATCC 700007 / DSM 6899 / JCM 31910 / BCRC 17059 / LMG 24140 / F1).